The primary structure comprises 522 residues: Glutamate--cysteine ligase (522 aa).

Belongs to the glutamate--cysteine ligase type 1 family. Type 1 subfamily.

The catalysed reaction is L-cysteine + L-glutamate + ATP = gamma-L-glutamyl-L-cysteine + ADP + phosphate + H(+). Its pathway is sulfur metabolism; glutathione biosynthesis; glutathione from L-cysteine and L-glutamate: step 1/2. The sequence is that of Glutamate--cysteine ligase from Vibrio campbellii (strain ATCC BAA-1116).